An 89-amino-acid chain; its full sequence is Mitochondrial import inner membrane translocase subunit Tim9 (89 aa).

At A2 the chain carries N-acetylalanine. Positions C28 to C52 match the Twin CX3C motif motif. 2 disulfide bridges follow: C28–C52 and C32–C48.

It belongs to the small Tim family. Heterohexamer; composed of 3 copies of TIMM9 and 3 copies of TIMM10/TIM10A, named soluble 70 kDa complex. The complex forms a 6-bladed alpha-propeller structure and associates with the TIMM22 component of the TIM22 complex. Interacts with multi-pass transmembrane proteins in transit. Also forms a complex composed of TIMM9, TIMM10/TIM10A and FXC1/TIM10B.

The protein localises to the mitochondrion inner membrane. Functionally, mitochondrial intermembrane chaperone that participates in the import and insertion of multi-pass transmembrane proteins into the mitochondrial inner membrane. May also be required for the transfer of beta-barrel precursors from the TOM complex to the sorting and assembly machinery (SAM complex) of the outer membrane. Acts as a chaperone-like protein that protects the hydrophobic precursors from aggregation and guide them through the mitochondrial intermembrane space. In Mus musculus (Mouse), this protein is Mitochondrial import inner membrane translocase subunit Tim9 (Timm9).